The primary structure comprises 77 residues: U14-theraphotoxin-Cg1a 2 (77 aa).

Residues 1–21 form the signal peptide; the sequence is MKTSVLLVILGIAAITVQCTA. A propeptide spanning residues 22–49 is cleaved from the precursor; that stretch reads SESVKQDSLRTFVDAVLGWNAEMASEAR. Disulfide bonds link cysteine 50–cysteine 64, cysteine 57–cysteine 69, and cysteine 63–cysteine 75. Lysine 77 is modified (lysine amide).

Belongs to the neurotoxin 10 (Hwtx-1) family. 65 (Jztx-21) subfamily. Expressed by the venom gland.

The protein resides in the secreted. Functionally, probable ion channel inhibitor. This chain is U14-theraphotoxin-Cg1a 2, found in Chilobrachys guangxiensis (Chinese earth tiger tarantula).